Here is a 501-residue protein sequence, read N- to C-terminus: Lysine--tRNA ligase (501 aa).

The Mg(2+) site is built by Glu-411 and Glu-418.

Belongs to the class-II aminoacyl-tRNA synthetase family. In terms of assembly, homodimer. Mg(2+) serves as cofactor.

The protein localises to the cytoplasm. It carries out the reaction tRNA(Lys) + L-lysine + ATP = L-lysyl-tRNA(Lys) + AMP + diphosphate. The sequence is that of Lysine--tRNA ligase from Magnetococcus marinus (strain ATCC BAA-1437 / JCM 17883 / MC-1).